We begin with the raw amino-acid sequence, 67 residues long: MAQGTVKWFNAEKGFGFISTENGQDVFAHFSAIQTNGFKTLEEGQKVAFDVEEGQRGPQAVNITKLA.

The CSD domain maps to 4–63 (GTVKWFNAEKGFGFISTENGQDVFAHFSAIQTNGFKTLEEGQKVAFDVEEGQRGPQAVNI).

In terms of assembly, homodimer.

Its subcellular location is the cytoplasm. The protein is Major cold shock protein (cspA) of Streptococcus pyogenes serotype M3 (strain ATCC BAA-595 / MGAS315).